The primary structure comprises 81 residues: Penaeidin-3j (81 aa).

An N-terminal signal peptide occupies residues 1 to 19 (MRLVVCLVFLASFALVCQG). Residue Gln20 is modified to Pyrrolidone carboxylic acid. 3 disulfide bridges follow: Cys50–Cys65, Cys54–Cys72, and Cys66–Cys73. Ser80 carries the post-translational modification Serine amide.

It belongs to the penaeidin family.

It is found in the cytoplasmic granule. Functionally, antibacterial and antifungal activity. Presents chitin-binding activity. The polypeptide is Penaeidin-3j (Penaeus vannamei (Whiteleg shrimp)).